The chain runs to 236 residues: Lectin CPL (236 aa).

Residues Glu8 and Asp10 each coordinate Mn(2+). Ca(2+) contacts are provided by Asp10, Tyr12, Asn14, and Asp19. Asn14 is a binding site for a carbohydrate. Mn(2+) contacts are provided by Asp19 and His24. Residues 99–100 (VY), Asp207, and Arg227 contribute to the a carbohydrate site.

It belongs to the leguminous lectin family. As to quaternary structure, homotetramer; dimer of dimers. Concanavalin A-like lectins of the Diocleinae subtribe undergo proteolytic processing referred to as circular permutation. The propeptide is split into an N-terminal and a C-terminal part, the gamma and beta chain, respectively. These are then religated in beta-gamma order to form the mature alpha chain. The beta and gamma chains can often be detected in cell extracts. Residues 1-118 of the mature chain, as displayed here, probably constitute the beta chain in the propeptide, residues 119-236 the gamma chain.

D-mannose/D-glucose-binding lectin that also binds derivative alpha-methyl-D-mannppyranoside. Has hemagglutinating activity towards rabbit erythrocytes. The sequence is that of Lectin CPL from Bionia pedicellata (Camptosema pedicellatum).